Here is a 463-residue protein sequence, read N- to C-terminus: uncharacterized protein (463 aa).

A PE domain is found at 1–93 (MSYMIAVPDM…AGAYASAEAT (93 aa)). Disordered regions lie at residues 231-320 (GGAG…AGNG) and 408-463 (NGGD…TPGQ). Gly residues predominate over residues 408–451 (NGGDGGKGGDAQLIGNGGNGGNGGKGGTGLMPGINGTGGAGGSR).

The protein belongs to the mycobacterial PE family. PGRS subfamily.

This is an uncharacterized protein from Mycobacterium tuberculosis (strain ATCC 25618 / H37Rv).